We begin with the raw amino-acid sequence, 671 residues long: E3 ubiquitin-protein ligase pub2 (671 aa).

A C2 domain is found at 1 to 112; that stretch reads MENIRFEVQL…KDDYKTRITL (112 aa). A WW domain is found at 242–275; it reads GPLPAGWEMRLSEDYHVYFVDHSTKTTTWSDPRD. The region spanning 338–671 is the HECT domain; it reads SVSDMKKKLL…IQETAGFGTE (334 aa). Cys639 acts as the Glycyl thioester intermediate in catalysis.

As to quaternary structure, interacts with the E2 ubiquitin-conjugating enzyme ubc4.

The protein resides in the membrane. It localises to the cytoplasm. The enzyme catalyses S-ubiquitinyl-[E2 ubiquitin-conjugating enzyme]-L-cysteine + [acceptor protein]-L-lysine = [E2 ubiquitin-conjugating enzyme]-L-cysteine + N(6)-ubiquitinyl-[acceptor protein]-L-lysine.. It functions in the pathway protein modification; protein ubiquitination. Functionally, E3 ubiquitin-protein ligase which accepts ubiquitin from an E2 ubiquitin-conjugating enzyme in the form of a thioester and then directly transfers the ubiquitin to targeted substrates. The chain is E3 ubiquitin-protein ligase pub2 (pub2) from Schizosaccharomyces pombe (strain 972 / ATCC 24843) (Fission yeast).